We begin with the raw amino-acid sequence, 210 residues long: Regulator of G-protein signaling 17 (210 aa).

Positions 1–21 are disordered; it reads MRKRQQSQNEGTPAVSQAPGN. Residues 84–200 enclose the RGS domain; that stretch reads NFDKMMKAPA…LNSQIYKSFV (117 aa). At Y137 the chain carries Phosphotyrosine.

In terms of assembly, interacts with GNAI1 and GNAQ. Interacts with GNAZ and GNAI2. Interacts with OPRM1. Forms a complex with mu-opioid receptors and G(alpha)z/i2 subunits, including GNAZ and GNAI2; the formation of this complex results in mu-opioid receptor desensitization. Interacts with HINT1. N- and O-glycosylated in synapsomal membranes. Post-translationally, serine phosphorylated in synapsomal membranes. In terms of processing, sumoylated with SUMO1 and SUM02 in synaptosomes. The sumoylated forms act as a scaffold for sequestering mu-opioid receptor-activated G(alpha) subunits. Desumoylated by HINT1. In terms of tissue distribution, predominantly expressed in the cerebellum. Also expressed in the cortex and medulla. Weakly expressed in a number of peripheral tissues notably spleen, lung and leukocytes.

It is found in the membrane. It localises to the synapse. Its subcellular location is the synaptosome. The protein resides in the nucleus. The protein localises to the cytoplasm. In terms of biological role, regulates G protein-coupled receptor signaling cascades, including signaling via muscarinic acetylcholine receptor CHRM2 and dopamine receptor DRD2. Inhibits signal transduction by increasing the GTPase activity of G protein alpha subunits, thereby driving them into their inactive GDP-bound form. Binds selectively to GNAZ and GNAI2 subunits, accelerates their GTPase activity and regulates their signaling activities. Negatively regulates mu-opioid receptor-mediated activation of the G-proteins. This is Regulator of G-protein signaling 17 (RGS17) from Homo sapiens (Human).